The chain runs to 505 residues: Phosphoethanolamine N-methyltransferase (505 aa).

The S-adenosyl-L-homocysteine site is built by G76, R81, D97, D122, V123, and N141. Residues S174, S179, G180, R184, and Y191 each coordinate phosphocholine. N-methylethanolamine phosphate is bound by residues 260–261 (QY) and Y269. Y269 serves as a coordination point for phosphocholine. V278, S279, G305, D327, D353, C354, and R370 together coordinate S-adenosyl-L-homocysteine. Phosphocholine contacts are provided by Y401, Y415, R419, Y421, and K487. Residues Y401, Y415, 419 to 421 (RGY), and K487 each bind N-methylethanolamine phosphate.

This sequence belongs to the class I-like SAM-binding methyltransferase superfamily. PEAMT family.

The enzyme catalyses phosphoethanolamine + S-adenosyl-L-methionine = N-methylethanolamine phosphate + S-adenosyl-L-homocysteine + H(+). It carries out the reaction N-methylethanolamine phosphate + S-adenosyl-L-methionine = N,N-dimethylethanolamine phosphate + S-adenosyl-L-homocysteine + H(+). It catalyses the reaction N,N-dimethylethanolamine phosphate + S-adenosyl-L-methionine = phosphocholine + S-adenosyl-L-homocysteine + H(+). It participates in phospholipid metabolism; phosphatidylcholine biosynthesis; phosphocholine from phosphoethanolamine: step 1/1. Inhibited by phosphatidic acid. Functionally, involved in phosphocholine biosynthesis. Catalyzes the N-methylation of phosphoethanolamine, phosphomonomethylethanolamine and phosphodimethylethanolamine, the three methylation steps required to convert phosphoethanolamine to phosphocholine (PC). The polypeptide is Phosphoethanolamine N-methyltransferase (Triticum aestivum (Wheat)).